Consider the following 922-residue polypeptide: MEDAPERTPSSSESTQPPGLAREPEVVSPGDSEGCARPLDTVPKKLCGYLSKFGGKGPIKGWKCRWFFYDERKCHLYYSRTAQDANPLDSIDLSSAVFDCKADAEEEGTFEIKTPSRVITLKAATKQAMLYWLQQLQMKRWEFHNSPPALPATPAAALAENGPTLHLKLEQEEAELEEFLCPVKTPTGLVGAAAALQPVPAVPSALQNISLKHLGTEIQNTMHNIRGNKQAQAAAHGPLVEDSPQGGEPQSGEQPSISDPSLPEKEPEDPAKSAPRSSVPSGPTQKPKRQSNTFPFFSDGLARSRTAQEKVAALEQQVLMLTKELKSQKELVIILHKALEAAQQEKRASSAYLAATEDRDRLELVRHKVRQIAELNQRVEALEQGRERLAHEAGLREQQVQALQQHVQLLMDKNHAKQQVICKLTQKLTEDLAQPADATNGDFLSQQERMEHLKDDMEAYRTQNRFLNSEIHQVTKIWRKVAEKEKALLTKCAYLQARNCQVESKYLAGLRRLQEAAGAEAGDFPELLQQLIQEALQWEAGEADSVGLSPVSEYDDYGFLTVPDYEMEDLKLLAKIQALEVRSHHLLAHEAVERPLRDRWATLTELTPSAELKQLLRAGVPREHRPRVWRWLVHRRVRHLQAPGCYQELLARGRACEHPAARQIELDLNRTFPTNKHFTCPTSSFPDKLRRVLLAFSWQNPTIGYCQGLNRLAAIALLVLEDEESAFWCLVAIVETILPAEYYSKTLTASQVDQRVLQDLLSEKLPRLTAHLGQHRVDLSLITFNWFLVVFADSLISDILLRVWDAFLYEGTKVVFRYALAIFKYNEEAILQLQDSLEIYQYLRFFTKTICDSRKLMSIAFNDMNPFPMKQLRQLRAAHRERLEAELRELELLKVEYLQRRASLGRAPPEGCVSEDEGEGDS.

A disordered region spans residues 1 to 37 (MEDAPERTPSSSESTQPPGLAREPEVVSPGDSEGCAR). An interaction with CADH1 region spans residues 1–168 (MEDAPERTPS…AENGPTLHLK (168 aa)). Residues 8–17 (TPSSSESTQP) are compositionally biased toward polar residues. Residues 43 to 141 (PKKLCGYLSK…WLQQLQMKRW (99 aa)) enclose the PH domain. Residues 228-297 (NKQAQAAAHG…KRQSNTFPFF (70 aa)) are disordered. Basic and acidic residues predominate over residues 262–271 (LPEKEPEDPA). A compositionally biased stretch (polar residues) spans 275-295 (PRSSVPSGPTQKPKRQSNTFP). Residues 298 to 435 (SDGLARSRTA…QKLTEDLAQP (138 aa)) are interaction with RAC1. 3 coiled-coil regions span residues 302 to 333 (ARSR…ELVI), 362 to 417 (LELV…NHAK), and 443 to 476 (FLSQ…QVTK). The 193-residue stretch at 619 to 811 (GVPREHRPRV…RVWDAFLYEG (193 aa)) folds into the Rab-GAP TBC domain. Residues 869-904 (MKQLRQLRAAHRERLEAELRELELLKVEYLQRRASL) adopt a coiled-coil conformation. Ser-914 is subject to Phosphoserine.

Interacts with activated RAC1 and CDH1.

The protein localises to the cytoplasm. It localises to the cytoplasmic vesicle. It is found in the cell junction. Acts as a GTPase-activating protein for RAB7A. Signal effector acting as a linker between RAC1 and RAB7A, leading to RAB7A inactivation and subsequent inhibition of cadherin degradation and reduced cell-cell adhesion. The chain is TBC1 domain family member 2A (Tbc1d2) from Mus musculus (Mouse).